We begin with the raw amino-acid sequence, 343 residues long: Isopentenyl-diphosphate delta-isomerase (343 aa).

Arg-9 to Lys-10 provides a ligand contact to substrate. FMN-binding positions include Ser-66, Ser-67–Thr-69, Ser-98, and Asn-126. Ser-98 to Arg-100 serves as a coordination point for substrate. Gln-161 is a substrate binding site. Position 162 (Glu-162) interacts with Mg(2+). FMN contacts are provided by residues Lys-193, Thr-223, Gly-273 to Arg-275, and Ala-294 to Ala-295.

It belongs to the IPP isomerase type 2 family. As to quaternary structure, homooctamer. Dimer of tetramers. The cofactor is FMN. It depends on NADPH as a cofactor. Mg(2+) serves as cofactor.

It is found in the cytoplasm. The catalysed reaction is isopentenyl diphosphate = dimethylallyl diphosphate. Its function is as follows. Involved in the biosynthesis of isoprenoids. Catalyzes the 1,3-allylic rearrangement of the homoallylic substrate isopentenyl (IPP) to its allylic isomer, dimethylallyl diphosphate (DMAPP). The chain is Isopentenyl-diphosphate delta-isomerase from Hydrogenovibrio crunogenus (strain DSM 25203 / XCL-2) (Thiomicrospira crunogena).